Reading from the N-terminus, the 385-residue chain is Probable dual-specificity RNA methyltransferase RlmN (385 aa).

The tract at residues 1–24 (MTATTAESGNLLPLVSGRSRPPRH) is disordered. Catalysis depends on Glu114, which acts as the Proton acceptor. The Radical SAM core domain maps to 120 to 364 (YPQRATVCVS…AATVRDTRGR (245 aa)). Cysteines 127 and 370 form a disulfide. [4Fe-4S] cluster contacts are provided by Cys134, Cys138, and Cys141. S-adenosyl-L-methionine-binding positions include 194 to 195 (GE), Ser228, 251 to 253 (SLH), and Asn327. Cys370 (S-methylcysteine intermediate) is an active-site residue.

Belongs to the radical SAM superfamily. RlmN family. It depends on [4Fe-4S] cluster as a cofactor.

Its subcellular location is the cytoplasm. The catalysed reaction is adenosine(2503) in 23S rRNA + 2 reduced [2Fe-2S]-[ferredoxin] + 2 S-adenosyl-L-methionine = 2-methyladenosine(2503) in 23S rRNA + 5'-deoxyadenosine + L-methionine + 2 oxidized [2Fe-2S]-[ferredoxin] + S-adenosyl-L-homocysteine. It carries out the reaction adenosine(37) in tRNA + 2 reduced [2Fe-2S]-[ferredoxin] + 2 S-adenosyl-L-methionine = 2-methyladenosine(37) in tRNA + 5'-deoxyadenosine + L-methionine + 2 oxidized [2Fe-2S]-[ferredoxin] + S-adenosyl-L-homocysteine. In terms of biological role, specifically methylates position 2 of adenine 2503 in 23S rRNA and position 2 of adenine 37 in tRNAs. The chain is Probable dual-specificity RNA methyltransferase RlmN from Parafrankia sp. (strain EAN1pec).